The sequence spans 129 residues: uncharacterized protein (129 aa).

A helical membrane pass occupies residues 33 to 50; that stretch reads MGGNVMWFIALLFALLIA.

The protein resides in the membrane. This is an uncharacterized protein from Saccharomyces cerevisiae (strain ATCC 204508 / S288c) (Baker's yeast).